The primary structure comprises 424 residues: CinA-like protein (424 aa).

Belongs to the CinA family.

The protein is CinA-like protein of Shewanella woodyi (strain ATCC 51908 / MS32).